A 758-amino-acid chain; its full sequence is Spastin (758 aa).

The interval 1–99 is disordered; it reads MVRTKNQSSS…PTTCSPRSGH (99 aa). The Cytoplasmic segment spans residues 1–121; sequence MVRTKNQSSS…KQNLYVVSFP (121 aa). A required for localization to punctate cytoplasmic foci region spans residues 1 to 210; that stretch reads MVRTKNQSSS…RPIQPLEMAA (210 aa). 4 stretches are compositionally biased toward low complexity: residues 8-29, 43-58, 66-76, and 85-95; these read SSSSSASSSSTKSPIKSSSATG, RSSSASNVAAVVAGGS, SSNRRSPGSSP, and TDDLTPTTCSP. An intramembrane region (helical) is located at residues 122-142; that stretch reads IIFLFNVLRSLIYQLFCIFRY. Residues 143 to 758 are Cytoplasmic-facing; that stretch reads LYGASTKVIY…WSQDYGDITI (616 aa). Polar residues-rich tracts occupy residues 169–180 and 189–198; these read SKEQQQSLNHPS and QEQQLSNQPQ. The interval 169–221 is disordered; it reads SKEQQQSLNHPSELNRDSDGQEQQLSNQPQRFRPIQPLEMAANRPGGGYSPGP. Residues 208 to 758 form a sufficient for interaction with microtubules and microtubule severing region; it reads MAANRPGGGY…WSQDYGDITI (551 aa). The MIT domain occupies 233–308; the sequence is HRRAFEYISK…SMARDRLHFL (76 aa). 2 disordered regions span residues 353–376 and 390–454; these read RVRSSGYGPKATTGAQPTASGRKL and NKSQ…ASTP. Composition is skewed to polar residues over residues 390-406 and 425-454; these read NKSQTLPRNLGSKTSVG and QFSSGRNTPPQRSRTPINNNGPSGSGASTP. The tract at residues 443–455 is required for interaction with microtubules; the sequence is NNGPSGSGASTPV. 523-530 lines the ATP pocket; the sequence is GPPGNGKT.

Belongs to the AAA ATPase family. Spastin subfamily. In terms of assembly, homohexamer. The homohexamer is stabilized by ATP-binding. The homohexamer may adopt a ring conformation through which microtubules pass prior to being severed. Interacts with microtubules. Interacts with atl; may be involved in microtubule dynamics.

The protein resides in the membrane. It is found in the cytoplasm. Its subcellular location is the cytoskeleton. The protein localises to the microtubule organizing center. It localises to the centrosome. The protein resides in the chromosome. It is found in the lipid droplet. The enzyme catalyses n ATP + n H2O + a microtubule = n ADP + n phosphate + (n+1) alpha/beta tubulin heterodimers.. Its function is as follows. ATP-dependent microtubule severing protein. Stimulates microtubule minus-end depolymerization and poleward microtubule flux in the mitotic spindle. Regulates microtubule stability in the neuromuscular junction synapse. Involved in lipid metabolism by regulating the size and distribution of lipid droplets. Involved in axon regeneration by regulating microtubule severing. This Drosophila yakuba (Fruit fly) protein is Spastin.